The following is a 106-amino-acid chain: Large ribosomal subunit protein uL24 (106 aa).

It belongs to the universal ribosomal protein uL24 family. Part of the 50S ribosomal subunit.

In terms of biological role, one of two assembly initiator proteins, it binds directly to the 5'-end of the 23S rRNA, where it nucleates assembly of the 50S subunit. Functionally, one of the proteins that surrounds the polypeptide exit tunnel on the outside of the subunit. The protein is Large ribosomal subunit protein uL24 of Thermosipho melanesiensis (strain DSM 12029 / CIP 104789 / BI429).